The sequence spans 194 residues: ATP-dependent Clp protease proteolytic subunit (194 aa).

S98 (nucleophile) is an active-site residue. H123 is a catalytic residue.

It belongs to the peptidase S14 family. In terms of assembly, fourteen ClpP subunits assemble into 2 heptameric rings which stack back to back to give a disk-like structure with a central cavity, resembling the structure of eukaryotic proteasomes.

It localises to the cytoplasm. The catalysed reaction is Hydrolysis of proteins to small peptides in the presence of ATP and magnesium. alpha-casein is the usual test substrate. In the absence of ATP, only oligopeptides shorter than five residues are hydrolyzed (such as succinyl-Leu-Tyr-|-NHMec, and Leu-Tyr-Leu-|-Tyr-Trp, in which cleavage of the -Tyr-|-Leu- and -Tyr-|-Trp bonds also occurs).. Its function is as follows. Cleaves peptides in various proteins in a process that requires ATP hydrolysis. Has a chymotrypsin-like activity. Plays a major role in the degradation of misfolded proteins. The chain is ATP-dependent Clp protease proteolytic subunit from Aliarcobacter butzleri (strain RM4018) (Arcobacter butzleri).